The chain runs to 398 residues: Probable transcription factor PosF21 (398 aa).

Disordered regions lie at residues 1–46 (MDKE…HDIS) and 112–150 (ATSS…NSLG). Positions 7-19 (PAPPCGGLPPPSP) are enriched in pro residues. Polar residues predominate over residues 125–148 (AWKNETMMQTGTGSTSNPQNTVNS). In terms of domain architecture, bZIP spans 201 to 264 (DPKRAKRIWA…NGLTVENNEL (64 aa)). A basic motif region spans residues 203 to 224 (KRAKRIWANRQSAARSKERKTR). The segment at 229-264 (LERKVQTLQTEATTLSAQLTLLQRDTNGLTVENNEL) is leucine-zipper.

The protein belongs to the bZIP family.

The protein localises to the nucleus. Putative transcription factor with an activatory role. This chain is Probable transcription factor PosF21 (POSF21), found in Arabidopsis thaliana (Mouse-ear cress).